The primary structure comprises 685 residues: Methionine--tRNA ligase (685 aa).

Residues P12–H22 carry the 'HIGH' region motif. Zn(2+) contacts are provided by C143, C146, C156, and C159. Positions K339–S343 match the 'KMSKS' region motif. K342 is an ATP binding site. The tRNA-binding domain occupies D582–G685.

Belongs to the class-I aminoacyl-tRNA synthetase family. MetG type 1 subfamily. In terms of assembly, homodimer. Zn(2+) serves as cofactor.

It localises to the cytoplasm. The enzyme catalyses tRNA(Met) + L-methionine + ATP = L-methionyl-tRNA(Met) + AMP + diphosphate. Functionally, is required not only for elongation of protein synthesis but also for the initiation of all mRNA translation through initiator tRNA(fMet) aminoacylation. The sequence is that of Methionine--tRNA ligase from Neisseria meningitidis serogroup B (strain ATCC BAA-335 / MC58).